Here is a 215-residue protein sequence, read N- to C-terminus: WAT1-related protein At3g28060 (215 aa).

The next 5 helical transmembrane spans lie at 48–68 (IIIG…AVAY), 82–102 (FALA…VSLF), 117–137 (IMLI…VVES), 146–166 (VFLA…GAIF), and 176–196 (VIGG…FHIA). The EamA domain occupies 65–186 (AVAYIVQTHI…IGGTLISIGF (122 aa)).

It belongs to the drug/metabolite transporter (DMT) superfamily. Plant drug/metabolite exporter (P-DME) (TC 2.A.7.4) family.

It is found in the membrane. This Arabidopsis thaliana (Mouse-ear cress) protein is WAT1-related protein At3g28060.